The primary structure comprises 335 residues: Dolichyl-diphosphooligosaccharide--protein glycosyltransferase subunit MAGT1 (335 aa).

The signal sequence occupies residues 1–29 (MAAGWWFWCVSVTVAVALLIVCDVPSVSA). At 30-184 (QRKKEMVLSE…DVNIRVIRPP (155 aa)) the chain is on the extracellular side. Positions 47 to 175 (WTNKRPVIRM…IARWIADRTD (129 aa)) constitute a Thioredoxin domain. The N-linked (GlcNAc...) asparagine glycan is linked to Asn71. Cys87 and Cys90 are joined by a disulfide. The chain crosses the membrane as a helical span at residues 185–205 (NYAGPLMLGLLLAVIGGLVYL). Residues 206–209 (RRSN) lie on the Cytoplasmic side of the membrane. A helical transmembrane segment spans residues 210–230 (MEFLFNKTGWAFAALCFVLAM). Topologically, residues 231–270 (TSGQMWNHIRGPPYAHKNPHTGHVNYIHGSSQAQFVAETH) are extracellular. Residues 271-291 (IVLLFNGGVTLGMVLLCEAAT) form a helical membrane-spanning segment. Over 292-300 (SDMDIGKRK) the chain is Cytoplasmic. A helical transmembrane segment spans residues 301 to 321 (IMCVAGIGLVVLFFSWMLSIF). Topologically, residues 322 to 335 (RSKYHGYPYSFLMS) are extracellular.

It belongs to the OST3/OST6 family. Accessory component of the STT3B-containing form of the oligosaccharyltransferase (OST) complex. OST exists in two different complex forms which contain common core subunits RPN1, RPN2, OST48, OST4, DAD1 and TMEM258, either STT3A or STT3B as catalytic subunits, and form-specific accessory subunits. OST can form stable complexes with the Sec61 complex or with both the Sec61 and TRAP complexes. The association of TUSC3 or MAGT1 with the STT3B-containing complex seems to be mutually exclusvice.

The protein localises to the cell membrane. The protein resides in the endoplasmic reticulum. Its subcellular location is the endoplasmic reticulum membrane. It participates in protein modification; protein glycosylation. Functionally, accessory component of the STT3B-containing form of the N-oligosaccharyl transferase (OST) complex which catalyzes the transfer of a high mannose oligosaccharide from a lipid-linked oligosaccharide donor to an asparagine residue within an Asn-X-Ser/Thr consensus motif in nascent polypeptide chains. Involved in N-glycosylation of STT3B-dependent substrates. Specifically required for the glycosylation of a subset of acceptor sites that are near cysteine residues; in this function seems to act redundantly with TUSC3. In its oxidized form proposed to form transient mixed disulfides with a glycoprotein substrate to facilitate access of STT3B to the unmodified acceptor site. Also has oxidoreductase-independent functions in the STT3B-containing OST complex possibly involving substrate recognition. Could indirectly play a role in Mg(2+) transport in epithelial cells. The chain is Dolichyl-diphosphooligosaccharide--protein glycosyltransferase subunit MAGT1 from Pongo abelii (Sumatran orangutan).